Reading from the N-terminus, the 461-residue chain is Ribulose bisphosphate carboxylase (461 aa).

Position 112 (Asn-112) interacts with substrate. Lys-167 (proton acceptor) is an active-site residue. Lys-169 contributes to the substrate binding site. 3 residues coordinate Mg(2+): Lys-192, Asp-194, and Glu-195. Lys-192 carries the post-translational modification N6-carboxylysine. His-288 (proton acceptor) is an active-site residue. Substrate is bound by residues Arg-289, His-322, and Ser-369.

It belongs to the RuBisCO large chain family. Type II subfamily. Homodimer. The cofactor is Mg(2+).

It carries out the reaction 2 (2R)-3-phosphoglycerate + 2 H(+) = D-ribulose 1,5-bisphosphate + CO2 + H2O. The enzyme catalyses D-ribulose 1,5-bisphosphate + O2 = 2-phosphoglycolate + (2R)-3-phosphoglycerate + 2 H(+). Its function is as follows. RuBisCO catalyzes two reactions: the carboxylation of D-ribulose 1,5-bisphosphate, the primary event in carbon dioxide fixation, as well as the oxidative fragmentation of the pentose substrate. Both reactions occur simultaneously and in competition at the same active site. The chain is Ribulose bisphosphate carboxylase from Rhodopseudomonas palustris (strain ATCC BAA-98 / CGA009).